We begin with the raw amino-acid sequence, 371 residues long: Heterodimeric geranylgeranyl pyrophosphate synthase large subunit 1, chloroplastic (371 aa).

Residues 1–51 (MASVTLGSWIVVHHHNHHHPSSILTKSRSRSCPITLTKPISFRSKRTVSSS) constitute a chloroplast transit peptide. Ser52 carries the post-translational modification N-acetylserine. Isopentenyl diphosphate contacts are provided by Lys116, Arg119, and His148. Positions 155 and 161 each coordinate Mg(2+). Residue Arg166 participates in dimethylallyl diphosphate binding. Arg167 provides a ligand contact to isopentenyl diphosphate. Positions 256, 257, 294, 311, and 321 each coordinate dimethylallyl diphosphate.

The protein belongs to the FPP/GGPP synthase family. As to quaternary structure, forms homodimers. Part of a heterodimeric geranyl(geranyl)diphosphate synthase. Interacts with GGR. Requires Mg(2+) as cofactor. As to expression, expressed ubiquitously.

The protein localises to the plastid. The protein resides in the chloroplast. It localises to the cytoplasm. It catalyses the reaction isopentenyl diphosphate + dimethylallyl diphosphate = (2E)-geranyl diphosphate + diphosphate. The catalysed reaction is isopentenyl diphosphate + (2E)-geranyl diphosphate = (2E,6E)-farnesyl diphosphate + diphosphate. The enzyme catalyses isopentenyl diphosphate + (2E,6E)-farnesyl diphosphate = (2E,6E,10E)-geranylgeranyl diphosphate + diphosphate. Its pathway is isoprenoid biosynthesis; farnesyl diphosphate biosynthesis; farnesyl diphosphate from geranyl diphosphate and isopentenyl diphosphate: step 1/1. It functions in the pathway isoprenoid biosynthesis; geranyl diphosphate biosynthesis; geranyl diphosphate from dimethylallyl diphosphate and isopentenyl diphosphate: step 1/1. It participates in isoprenoid biosynthesis; geranylgeranyl diphosphate biosynthesis; geranylgeranyl diphosphate from farnesyl diphosphate and isopentenyl diphosphate: step 1/1. Its function is as follows. Heterodimeric geranyl(geranyl)-diphosphate (GPP) synthase large subunit. In vitro, the large subunit catalyzes mainly the trans-addition of the three molecules of IPP onto DMAPP to form geranylgeranyl pyrophosphate while the small subunit alone is inactive. Upon association of the two subunits, the product profile changes and the production of gerany-diphosphate is strongly increased. In Arabidopsis thaliana (Mouse-ear cress), this protein is Heterodimeric geranylgeranyl pyrophosphate synthase large subunit 1, chloroplastic (GGPPS1).